Consider the following 490-residue polypeptide: UDP-N-acetylmuramoyl-L-alanyl-D-glutamate--2,6-diaminopimelate ligase (490 aa).

UDP-N-acetyl-alpha-D-muramoyl-L-alanyl-D-glutamate-binding positions include L22, S24, and 39-41 (HQT). Position 111–117 (111–117 (GTNGKTT)) interacts with ATP. UDP-N-acetyl-alpha-D-muramoyl-L-alanyl-D-glutamate is bound by residues N152, 153–154 (TT), S180, Q186, and R188. K220 carries the N6-carboxylysine modification. Meso-2,6-diaminopimelate-binding positions include R385, 409–412 (DNPR), G460, and E464. The Meso-diaminopimelate recognition motif signature appears at 409-412 (DNPR).

Belongs to the MurCDEF family. MurE subfamily. It depends on Mg(2+) as a cofactor. Carboxylation is probably crucial for Mg(2+) binding and, consequently, for the gamma-phosphate positioning of ATP.

The protein localises to the cytoplasm. The catalysed reaction is UDP-N-acetyl-alpha-D-muramoyl-L-alanyl-D-glutamate + meso-2,6-diaminopimelate + ATP = UDP-N-acetyl-alpha-D-muramoyl-L-alanyl-gamma-D-glutamyl-meso-2,6-diaminopimelate + ADP + phosphate + H(+). Its pathway is cell wall biogenesis; peptidoglycan biosynthesis. Its function is as follows. Catalyzes the addition of meso-diaminopimelic acid to the nucleotide precursor UDP-N-acetylmuramoyl-L-alanyl-D-glutamate (UMAG) in the biosynthesis of bacterial cell-wall peptidoglycan. The chain is UDP-N-acetylmuramoyl-L-alanyl-D-glutamate--2,6-diaminopimelate ligase from Yersinia pestis.